A 256-amino-acid polypeptide reads, in one-letter code: Probable enoyl-CoA hydratase echA14 (256 aa).

The interval 235-256 is disordered; the sequence is GPQAKSVQSPEFAARLAAAQHR.

This sequence belongs to the enoyl-CoA hydratase/isomerase family.

The enzyme catalyses a (3S)-3-hydroxyacyl-CoA = a (2E)-enoyl-CoA + H2O. It carries out the reaction a 4-saturated-(3S)-3-hydroxyacyl-CoA = a (3E)-enoyl-CoA + H2O. Functionally, could possibly oxidize fatty acids using specific components. The protein is Probable enoyl-CoA hydratase echA14 (echA14) of Mycobacterium tuberculosis (strain CDC 1551 / Oshkosh).